The primary structure comprises 100 residues: GGGWNGWNGLGGGWNGLGVGWSRLDGGYGGGCGSYGGEGIGNVGVADELPVGGVTAVGGRVPIIGGVEYGGPARAAGAVSICGHCAPTCGCGRAGLGGYY.

The segment at 1 to 33 (GGGWNGWNGLGGGWNGLGVGWSRLDGGYGGGCG) is left arm. The tract at residues 34–81 (SYGGEGIGNVGVADELPVGGVTAVGGRVPIIGGVEYGGPARAAGAVSI) is central domain. Residues 82-100 (CGHCAPTCGCGRAGLGGYY) are right arm.

It belongs to the chorion protein family.

This protein is one of many from the eggshell of the silk moth. This is Chorion class A protein M2774 from Bombyx mori (Silk moth).